A 334-amino-acid chain; its full sequence is L-lactate dehydrogenase C chain (334 aa).

Residues 30-58, Arg-100, and Asn-139 each bind NAD(+); that span reads GQVG…LEDK. Positions 139 and 170 each coordinate substrate. His-194 serves as the catalytic Proton acceptor. Thr-249 contacts substrate.

This sequence belongs to the LDH/MDH superfamily. LDH family. Homotetramer.

It is found in the cytoplasm. The catalysed reaction is (S)-lactate + NAD(+) = pyruvate + NADH + H(+). Its pathway is fermentation; pyruvate fermentation to lactate; (S)-lactate from pyruvate: step 1/1. The sequence is that of L-lactate dehydrogenase C chain (ldhc) from Xenopus laevis (African clawed frog).